The sequence spans 64 residues: Small ribosomal subunit protein bS21 (64 aa).

Belongs to the bacterial ribosomal protein bS21 family.

The sequence is that of Small ribosomal subunit protein bS21 from Karelsulcia muelleri (strain GWSS) (Sulcia muelleri).